We begin with the raw amino-acid sequence, 131 residues long: DQDCLPGWSFYEGHCYKVFNVKKTWEDAEKFCQKQSNGKHLATIEWLGKANFVAELVTLMKLETHVWIGLRVEDKRQQCSSHWTDGSAVSYENVVHNTKCFGLDQKTGYRTWVALRCELAYHFICMSRVPR.

3 disulfides stabilise this stretch: C4–C15, C32–C125, and C100–C117. The region spanning 11–126 (YEGHCYKVFN…CELAYHFICM (116 aa)) is the C-type lectin domain.

Belongs to the snaclec family. As to quaternary structure, heterodimer; disulfide-linked. In terms of tissue distribution, expressed by the venom gland.

The protein resides in the secreted. Its function is as follows. Interferes with one step of hemostasis (modulation of platelet aggregation, or coagulation cascade, for example). This Macrovipera lebetinus (Levantine viper) protein is Snaclec A13.